A 435-amino-acid polypeptide reads, in one-letter code: Ras association domain-containing protein 9 (435 aa).

The tract at residues 1–22 (MAPFGRNLLKTRHKNRSPTKDM) is disordered. The Ras-associating domain maps to 25 to 119 (EEKEIVVWVC…MQFVLVKTDA (95 aa)). A coiled-coil region spans residues 195–291 (HTIHQQVQRM…KLSAEIEREV (97 aa)). Residues 371 to 423 (SKDGCQGKENRGKEAEASSSNGEIPPLTQRVFNTYTNDTDSDTGISSNHSQDS) form a disordered region. A compositionally biased stretch (basic and acidic residues) spans 375–386 (CQGKENRGKEAE). The segment covering 400-423 (RVFNTYTNDTDSDTGISSNHSQDS) has biased composition (polar residues).

As to quaternary structure, interacts with PAM. As to expression, testis, kidney, skeletal muscle, liver, lung, brain, heart, pituitary gland, adrenal gland and ovary.

It localises to the endosome. May play a role in regulating vesicuar trafficking in cells. The sequence is that of Ras association domain-containing protein 9 (Rassf9) from Rattus norvegicus (Rat).